Consider the following 683-residue polypeptide: E3 ubiquitin-protein ligase RNF103 (683 aa).

A run of 4 helical transmembrane segments spans residues 6–26 (FFLL…EAIV), 326–346 (LFVL…FITQ), 366–386 (LLII…LDSF), and 411–431 (MFYT…GLLI). A compositionally biased stretch (acidic residues) spans 525–542 (EEMSESSQDTENDSDSDN). The interval 525 to 548 (EEMSESSQDTENDSDSDNMDTFSS) is disordered. The RING-type zinc-finger motif lies at 619-661 (CVVCLENFENGCLLMGLPCGHVFHQNCIVMWLAGGRHCCPVCR).

As to quaternary structure, interacts with DERL1 and VCP. Highly expressed in the normal cerebellum but not in the cerebral cortex.

It localises to the endoplasmic reticulum membrane. The enzyme catalyses S-ubiquitinyl-[E2 ubiquitin-conjugating enzyme]-L-cysteine + [acceptor protein]-L-lysine = [E2 ubiquitin-conjugating enzyme]-L-cysteine + N(6)-ubiquitinyl-[acceptor protein]-L-lysine.. The protein operates within protein modification; protein ubiquitination. In terms of biological role, acts as an E2-dependent E3 ubiquitin-protein ligase, probably involved in the ER-associated protein degradation pathway. The polypeptide is E3 ubiquitin-protein ligase RNF103 (Rnf103) (Mus musculus (Mouse)).